The primary structure comprises 285 residues: Polyamine aminopropyltransferase (285 aa).

A PABS domain is found at 5–241 (DNWYIEHFQP…GWWSVTMASK (237 aa)). Q35 lines the S-methyl-5'-thioadenosine pocket. Positions 66 and 90 each coordinate spermidine. Residues D110 and 141–142 (DG) each bind S-methyl-5'-thioadenosine. The Proton acceptor role is filled by D160. 160 to 163 (DSTD) is a binding site for spermidine. P167 contacts S-methyl-5'-thioadenosine.

It belongs to the spermidine/spermine synthase family. In terms of assembly, homodimer or homotetramer.

The protein localises to the cytoplasm. The catalysed reaction is S-adenosyl 3-(methylsulfanyl)propylamine + putrescine = S-methyl-5'-thioadenosine + spermidine + H(+). It functions in the pathway amine and polyamine biosynthesis; spermidine biosynthesis; spermidine from putrescine: step 1/1. Functionally, catalyzes the irreversible transfer of a propylamine group from the amino donor S-adenosylmethioninamine (decarboxy-AdoMet) to putrescine (1,4-diaminobutane) to yield spermidine. In Xanthomonas campestris pv. campestris (strain 8004), this protein is Polyamine aminopropyltransferase.